Here is a 2032-residue protein sequence, read N- to C-terminus: Cytoskeleton-associated protein 5 (2032 aa).

3 TOG regions span residues 1–223 (MGDD…KLPT), 268–502 (YELL…LVHG), and 588–817 (SIEV…GQSP). K48 is subject to N6-acetyllysine. HEAT repeat units lie at residues 159–197 (IISL…WNRD), 356–394 (GQYA…TTTL), and 434–472 (KSLL…VVGE). The interval 501 to 579 (HGKKSGLATE…GTKNKKGLET (79 aa)) is disordered. One copy of the HEAT 4 repeat lies at 750–788 (ELNVKAFISNVKTALAATNPAVRTSAITLLGVMYLYVGP). The disordered stretch occupies residues 811–848 (KMQGQSPPAPTRGIAKHSTSATDEGEDGEEPGEGGNDV). S816 is modified (phosphoserine). Over residues 833 to 842 (DEGEDGEEPG) the composition is skewed to acidic residues. TOG stretches follow at residues 853–1081 (PRIE…ANMP) and 1193–1428 (IEQL…KRPS). HEAT repeat units follow at residues 855 to 893 (IEIS…EAKF), 936 to 974 (RQHV…QTGM), and 1013 to 1051 (PTDL…HLGY). A compositionally biased stretch (low complexity) spans 1078–1095 (ANMPSKPAAPAKAMSKPM). The segment at 1078–1156 (ANMPSKPAAP…KTTLKEDDDK (79 aa)) is disordered. HEAT repeat units follow at residues 1284–1322 (ENEA…VYPA), 1324–1357 (KMFP…SYGM), and 1361–1399 (QPTP…VHGD). Residues 1420–1459 (IKRSAKRPSAAPVKQAEEKPQRTQNINSNANMLRKGPAED) form a disordered region. Positions 1441-1450 (RTQNINSNAN) are enriched in polar residues. S1469 carries the phosphoserine modification. Positions 1801-1822 (SMDQTGSKSDKETEKGASRIDE) are disordered. Positions 1808–1822 (KSDKETEKGASRIDE) are enriched in basic and acidic residues. Residue S1861 is modified to Phosphoserine. Disordered stretches follow at residues 1893–1926 (SKGR…GNTN) and 1948–2032 (LDNT…SSRK). A compositionally biased stretch (low complexity) spans 1909–1921 (VTCVPTPTSTVSS). Residues 1932–1957 (PSVYLERLKILRQRCGLDNTKQDDRP) are interaction with TACC3. A compositionally biased stretch (polar residues) spans 1972 to 1983 (ASSTDMLHSKLS). Residues 1984–1997 (QLRESREQHQHSDL) are compositionally biased toward basic and acidic residues. A compositionally biased stretch (low complexity) spans 2002–2015 (THSAGTMTSSSSTT). Positions 2018–2032 (DDLKKRLERIKSSRK) are enriched in basic and acidic residues.

Belongs to the TOG/XMAP215 family. Interacts with TACC1. Interacts with HNRNPA2B1. Interacts with TACC3 independently of clathrin. Interacts with TACC3 and clathrin forming the TACC3/ch-TOG/clathrin complex located at spindle inter-microtubules bridges. Interacts with NDC80; indicative for an association with the NDC80 complex. Interacts with SLAIN2. Interacts with SLAIN1.

The protein localises to the cytoplasm. The protein resides in the cytoskeleton. It localises to the microtubule organizing center. Its subcellular location is the centrosome. It is found in the spindle pole. The protein localises to the spindle. The protein resides in the chromosome. It localises to the centromere. Its subcellular location is the kinetochore. Functionally, binds to the plus end of microtubules and regulates microtubule dynamics and microtubule organization. Acts as a processive microtubule polymerase. Promotes cytoplasmic microtubule nucleation and elongation. Plays a major role in organizing spindle poles. In spindle formation protects kinetochore microtubules from depolymerization by KIF2C and has an essential role in centrosomal microtubule assembly independently of KIF2C activity. Contributes to centrosome integrity. Acts as a component of the TACC3/ch-TOG/clathrin complex proposed to contribute to stabilization of kinetochore fibers of the mitotic spindle by acting as inter-microtubule bridge. The TACC3/ch-TOG/clathrin complex is required for the maintenance of kinetochore fiber tension. Enhances the strength of NDC80 complex-mediated kinetochore-tip microtubule attachments. The chain is Cytoskeleton-associated protein 5 from Mus musculus (Mouse).